The sequence spans 396 residues: Cell division protein DivIB (396 aa).

2 disordered regions span residues 1-23 (MSKD…SEWQ) and 37-116 (EVAL…ATKE). Residues 1 to 130 (MSKDKKNEDK…AKIPGIHILR (130 aa)) lie on the Cytoplasmic side of the membrane. Composition is skewed to basic and acidic residues over residues 37–65 (EVAL…KQDQ) and 75–116 (ESAK…ATKE). A helical membrane pass occupies residues 131–151 (AFTILFPSLLLLIVSAYLLSP). The Extracellular portion of the chain corresponds to 152 to 396 (YATMKDIRVE…NQTNQRSSRR (245 aa)). The 71-residue stretch at 153–223 (ATMKDIRVEG…TKFTIKVKEY (71 aa)) folds into the POTRA domain. A compositionally biased stretch (basic and acidic residues) spans 361 to 385 (KAKQEAKEAEKKQEEEQKKQEEESN). A disordered region spans residues 361-396 (KAKQEAKEAEKKQEEEQKKQEEESNRNQTNQRSSRR). Residues 386–396 (RNQTNQRSSRR) are compositionally biased toward low complexity.

It belongs to the FtsQ/DivIB family. DivIB subfamily.

The protein localises to the cell membrane. Cell division protein that may be involved in stabilizing or promoting the assembly of the division complex. In Streptococcus pneumoniae (strain ATCC BAA-255 / R6), this protein is Cell division protein DivIB.